We begin with the raw amino-acid sequence, 674 residues long: E3 ubiquitin ligase Rnf157 (674 aa).

Residues 277 to 316 (CVVCLSDVRDTLILPCRHLCLCNACADTLRYQASNCPICR) form an RING-type zinc finger. 2 disordered regions span residues 376 to 404 (LTPSPSAPPLRALGEARRPGGLPSYGSDI) and 433 to 610 (QNSS…TGRE). A compositionally biased stretch (polar residues) spans 469-508 (TPESENLTLSSSGAIDQSSCTGTPLSPTISSPEDPLSSSL). Low complexity predominate over residues 509 to 526 (AQSIMSMASSHSQQSQLS). Residues 527 to 537 (TDTVSSMSGSY) are compositionally biased toward polar residues. The segment covering 583-604 (EEMDAEGNVTEEEFASPEEDDG) has biased composition (acidic residues).

Its subcellular location is the cytoplasm. It carries out the reaction S-ubiquitinyl-[E2 ubiquitin-conjugating enzyme]-L-cysteine + [acceptor protein]-L-lysine = [E2 ubiquitin-conjugating enzyme]-L-cysteine + N(6)-ubiquitinyl-[acceptor protein]-L-lysine.. Its function is as follows. E3 ubiquitin ligase that ubiquitinates apbb1 for its degradation by the proteasome and thus prevents apoptosis and promotes survival of neurons. Has a dual role in neurons as it is also required for dendrite growth and maintenance for which its ligase activity is not critical. May act as a scaffold molecule to regulate this process. Acts as a downstream effector of the interconnected PI3K and MAPK signaling pathways and thus participates in the regulation of the cell cycle. This chain is E3 ubiquitin ligase Rnf157 (rnf157), found in Xenopus laevis (African clawed frog).